We begin with the raw amino-acid sequence, 65 residues long: Sec-independent protein translocase protein TatA (65 aa).

A helical transmembrane segment spans residues 9–29; the sequence is ILIIVLLVVVVFGVGKLPQVG. The segment at 40 to 65 is disordered; sequence RKASTGEDAKEEVETKEETKPAEKSE. The segment covering 43–65 has biased composition (basic and acidic residues); it reads STGEDAKEEVETKEETKPAEKSE.

It belongs to the TatA/E family. As to quaternary structure, forms a complex with TatC.

Its subcellular location is the cell membrane. Part of the twin-arginine translocation (Tat) system that transports large folded proteins containing a characteristic twin-arginine motif in their signal peptide across membranes. TatA could form the protein-conducting channel of the Tat system. This chain is Sec-independent protein translocase protein TatA, found in Dehalococcoides mccartyi (strain ATCC BAA-2100 / JCM 16839 / KCTC 5957 / BAV1).